The following is a 200-amino-acid chain: Putative peroxiredoxin sll0755 (200 aa).

Residues 5–163 (LRVGQPAPDF…TLRVLKAIRH (159 aa)) enclose the Thioredoxin domain. Cysteine 50 (cysteine sulfenic acid (-SOH) intermediate) is an active-site residue.

The protein belongs to the peroxiredoxin family. AhpC/Prx1 subfamily. In terms of assembly, homodimer; disulfide-linked, upon oxidation.

Its subcellular location is the cytoplasm. The enzyme catalyses a hydroperoxide + [thioredoxin]-dithiol = an alcohol + [thioredoxin]-disulfide + H2O. Functionally, thiol-specific peroxidase that catalyzes the reduction of hydrogen peroxide and organic hydroperoxides to water and alcohols, respectively. Plays a role in cell protection against oxidative stress by detoxifying peroxides. The sequence is that of Putative peroxiredoxin sll0755 from Synechocystis sp. (strain ATCC 27184 / PCC 6803 / Kazusa).